Here is a 525-residue protein sequence, read N- to C-terminus: Lymphocyte activation gene 3 protein (525 aa).

Positions 1–22 are cleaved as a signal peptide; that stretch reads MWEAQFLGLLFLQPLWVAPVKP. Over 23-450 the chain is Extracellular; it reads LQPGAEVPVV…APGALPAGHL (428 aa). An Ig-like V-type domain is found at 37–167; sequence GAPAQLPCSP…LSCRLRLRLG (131 aa). The tract at residues 37–252 is interaction with FGL1; the sequence is GAPAQLPCSP…LTYRDGFNVS (216 aa). A disulfide bridge connects residues C44 and C160. The disordered stretch occupies residues 62–97; the sequence is TWQHQPDSGPPAAAPGHPLAPGPHPAAPSSWGPRPR. Over residues 69-87 the composition is skewed to pro residues; it reads SGPPAAAPGHPLAPGPHPA. One can recognise an Ig-like C2-type 1 domain in the interval 168–252; the sequence is QASMTASPPG…LTYRDGFNVS (85 aa). N188 carries N-linked (GlcNAc...) asparagine glycosylation. C189 and C241 are oxidised to a cystine. N-linked (GlcNAc...) asparagine glycans are attached at residues N250 and N256. 2 consecutive Ig-like C2-type domains span residues 265–343 and 348–419; these read PTPL…QQLN and LAII…QGER. C282 and C333 are oxidised to a cystine. The N-linked (GlcNAc...) asparagine glycan is linked to N343. C369 and C412 are disulfide-bonded. Residues 429-450 are connecting peptide; sequence ELSSPGAQRSGRAPGALPAGHL. Residues 451–471 traverse the membrane as a helical segment; it reads LLFLILGVLSLLLLVTGAFGF. Residues 472-525 are Cytoplasmic-facing; that stretch reads HLWRRQWRPRRFSALEQGIHPPQAQSKIEELEQEPEPEPEPEPEPEPEPEPEQL. Residues 487–525 are disordered; it reads EQGIHPPQAQSKIEELEQEPEPEPEPEPEPEPEPEPEQL. The short motif at 498-503 is the KIEELE motif element; it reads KIEELE. Residues 501-524 form a 12 X 2 AA tandem repeats of E-X region; sequence ELEQEPEPEPEPEPEPEPEPEPEQ. The span at 502 to 525 shows a compositional bias: acidic residues; sequence LEQEPEPEPEPEPEPEPEPEPEQL.

It belongs to the LAG3 family. In terms of assembly, interacts with MHC class II (MHC-II); selectively recognizes stable complexes of peptide and MHC-II. Interacts with FGL1 (via the Fibrinogen C-terminal domain). Post-translationally, proteolytically cleaved by ADAM10 and ADAM17 within the connecting peptide region, leading to release of Secreted lymphocyte activation gene 3 protein (sLAG-3). ADAM10 mediates constitutive cleavage, but cleavage increases following T-cell activation, whereas shedding by ADAM17 is induced by TCR signaling in a PRKCQ-dependent manner. As to expression, primarily expressed in activated T-cells and a subset of natural killer (NK) cells.

Its subcellular location is the cell membrane. The protein resides in the secreted. Functionally, lymphocyte activation gene 3 protein: Inhibitory receptor on antigen activated T-cells. Delivers inhibitory signals upon binding to ligands, such as FGL1. FGL1 constitutes a major ligand of LAG3 and is responsible for LAG3 T-cell inhibitory function. Following TCR engagement, LAG3 associates with CD3-TCR in the immunological synapse and directly inhibits T-cell activation. May inhibit antigen-specific T-cell activation in synergy with PDCD1/PD-1, possibly by acting as a coreceptor for PDCD1/PD-1. Negatively regulates the proliferation, activation, effector function and homeostasis of both CD8(+) and CD4(+) T-cells. Also mediates immune tolerance: constitutively expressed on a subset of regulatory T-cells (Tregs) and contributes to their suppressive function. Also acts as a negative regulator of plasmacytoid dendritic cell (pDCs) activation. Binds MHC class II (MHC-II); the precise role of MHC-II-binding is however unclear. May function as a ligand for MHC class II (MHC-II) on antigen-presenting cells (APC), promoting APC activation/maturation and driving Th1 immune response. The polypeptide is Lymphocyte activation gene 3 protein (Homo sapiens (Human)).